The following is a 300-amino-acid chain: Ribosomal protein L11 methyltransferase (300 aa).

S-adenosyl-L-methionine-binding residues include threonine 147, glycine 168, aspartate 190, and asparagine 236.

This sequence belongs to the methyltransferase superfamily. PrmA family.

It localises to the cytoplasm. It carries out the reaction L-lysyl-[protein] + 3 S-adenosyl-L-methionine = N(6),N(6),N(6)-trimethyl-L-lysyl-[protein] + 3 S-adenosyl-L-homocysteine + 3 H(+). In terms of biological role, methylates ribosomal protein L11. This Leptospira borgpetersenii serovar Hardjo-bovis (strain JB197) protein is Ribosomal protein L11 methyltransferase.